The sequence spans 478 residues: Cytochrome c-552 (478 aa).

Positions 1-26 (MARKTLRARRFFSLIFPFFFITSVYA) are cleaved as a signal peptide. His-94 is a heme c binding site. Heme-binding residues include Cys-122, Cys-125, and Lys-126. Heme c-binding residues include Cys-160, Cys-163, His-164, Cys-209, Cys-212, and His-213. The Ca(2+) site is built by Glu-215, Tyr-216, Lys-261, and Gln-263. Position 216 (Tyr-216) interacts with substrate. His-264 is a substrate binding site. His-275, Cys-282, Cys-285, His-286, His-301, Cys-314, Cys-317, His-318, and His-393 together coordinate heme c.

Belongs to the cytochrome c-552 family. Requires Ca(2+) as cofactor. Heme c is required as a cofactor.

The protein resides in the periplasm. It catalyses the reaction 6 Fe(III)-[cytochrome c] + NH4(+) + 2 H2O = 6 Fe(II)-[cytochrome c] + nitrite + 8 H(+). The protein operates within nitrogen metabolism; nitrate reduction (assimilation). In terms of biological role, catalyzes the reduction of nitrite to ammonia, consuming six electrons in the process. The protein is Cytochrome c-552 of Salmonella agona (strain SL483).